The sequence spans 502 residues: Ribose import ATP-binding protein RbsA (502 aa).

ABC transporter domains lie at 3–239 (VTMR…VGRE) and 249–493 (AAPG…TGGA). 35–42 (GENGAGKS) is a binding site for ATP.

This sequence belongs to the ABC transporter superfamily. Ribose importer (TC 3.A.1.2.1) family. As to quaternary structure, the complex is composed of an ATP-binding protein (RbsA), two transmembrane proteins (RbsC) and a solute-binding protein (RbsB).

The protein resides in the cell inner membrane. The catalysed reaction is D-ribose(out) + ATP + H2O = D-ribose(in) + ADP + phosphate + H(+). Part of the ABC transporter complex RbsABC involved in ribose import. Responsible for energy coupling to the transport system. The polypeptide is Ribose import ATP-binding protein RbsA (Chromobacterium violaceum (strain ATCC 12472 / DSM 30191 / JCM 1249 / CCUG 213 / NBRC 12614 / NCIMB 9131 / NCTC 9757 / MK)).